Consider the following 364-residue polypeptide: Thymidine kinase (364 aa).

Position 36-43 (36-43 (GPFGVGKT)) interacts with ATP. Glutamate 64 serves as the catalytic Proton acceptor. Glutamine 108 serves as a coordination point for substrate. Arginine 201 provides a ligand contact to ATP. Arginine 207 lines the substrate pocket.

It belongs to the herpesviridae thymidine kinase family. In terms of assembly, homodimer.

The enzyme catalyses thymidine + ATP = dTMP + ADP + H(+). Its function is as follows. Catalyzes the transfer of the gamma-phospho group of ATP to thymidine to generate dTMP in the salvage pathway of pyrimidine synthesis. The dTMP serves as a substrate for DNA polymerase during viral DNA replication. Allows the virus to be reactivated and to grow in non-proliferative cells lacking a high concentration of phosphorylated nucleic acid precursors. The protein is Thymidine kinase of Infectious laryngotracheitis virus (strain Thorne V882) (ILTV).